Reading from the N-terminus, the 415-residue chain is Methylthioribose-1-phosphate isomerase (415 aa).

Catalysis depends on Asp-284, which acts as the Proton donor.

It belongs to the eIF-2B alpha/beta/delta subunits family. MtnA subfamily.

It is found in the cytoplasm. The protein localises to the nucleus. It catalyses the reaction 5-(methylsulfanyl)-alpha-D-ribose 1-phosphate = 5-(methylsulfanyl)-D-ribulose 1-phosphate. The protein operates within amino-acid biosynthesis; L-methionine biosynthesis via salvage pathway; L-methionine from S-methyl-5-thio-alpha-D-ribose 1-phosphate: step 1/6. Functionally, catalyzes the interconversion of methylthioribose-1-phosphate (MTR-1-P) into methylthioribulose-1-phosphate (MTRu-1-P). The polypeptide is Methylthioribose-1-phosphate isomerase (Vanderwaltozyma polyspora (strain ATCC 22028 / DSM 70294 / BCRC 21397 / CBS 2163 / NBRC 10782 / NRRL Y-8283 / UCD 57-17) (Kluyveromyces polysporus)).